The sequence spans 122 residues: NADPH-dependent 7-cyano-7-deazaguanine reductase (122 aa).

Residue cysteine 34 is the Thioimide intermediate of the active site. The active-site Proton donor is aspartate 41. Substrate contacts are provided by residues 56 to 58 (VEL) and 75 to 76 (HE).

This sequence belongs to the GTP cyclohydrolase I family. QueF type 1 subfamily.

Its subcellular location is the cytoplasm. The enzyme catalyses 7-aminomethyl-7-carbaguanine + 2 NADP(+) = 7-cyano-7-deazaguanine + 2 NADPH + 3 H(+). Its pathway is tRNA modification; tRNA-queuosine biosynthesis. Catalyzes the NADPH-dependent reduction of 7-cyano-7-deazaguanine (preQ0) to 7-aminomethyl-7-deazaguanine (preQ1). The protein is NADPH-dependent 7-cyano-7-deazaguanine reductase of Anaeromyxobacter dehalogenans (strain 2CP-C).